The primary structure comprises 180 residues: Small ribosomal subunit protein uS5 (180 aa).

Residues 24-87 (MIEKLVAVNR…EQARKNLVSV (64 aa)) form the S5 DRBM domain.

It belongs to the universal ribosomal protein uS5 family. In terms of assembly, part of the 30S ribosomal subunit. Contacts proteins S4 and S8.

In terms of biological role, with S4 and S12 plays an important role in translational accuracy. Located at the back of the 30S subunit body where it stabilizes the conformation of the head with respect to the body. The polypeptide is Small ribosomal subunit protein uS5 (Stenotrophomonas maltophilia (strain R551-3)).